A 234-amino-acid polypeptide reads, in one-letter code: tRNA (guanine-N(1)-)-methyltransferase (234 aa).

G113 is an S-adenosyl-L-methionine binding site.

This sequence belongs to the RNA methyltransferase TrmD family. As to quaternary structure, homodimer.

Its subcellular location is the cytoplasm. The enzyme catalyses guanosine(37) in tRNA + S-adenosyl-L-methionine = N(1)-methylguanosine(37) in tRNA + S-adenosyl-L-homocysteine + H(+). Its function is as follows. Specifically methylates guanosine-37 in various tRNAs. This chain is tRNA (guanine-N(1)-)-methyltransferase, found in Gluconobacter oxydans (strain 621H) (Gluconobacter suboxydans).